The primary structure comprises 202 residues: Peptide methionine sulfoxide reductase B1, chloroplastic (202 aa).

Residues 1–63 (MASSTRLTII…SSSPKPDNVQ (63 aa)) constitute a chloroplast transit peptide. Positions 48-67 (YSMGSSSSSPKPDNVQEAEK) are disordered. Residues 75–197 (ENEWKKRLTP…NSAALKLNAL (123 aa)) enclose the MsrB domain. Cys114, Cys117, Cys163, and Cys166 together coordinate Zn(2+). Cys186 (nucleophile) is an active-site residue.

It belongs to the MsrB Met sulfoxide reductase family. The cofactor is Zn(2+). As to expression, expressed at low levels in stems, leaves, floral buds, flowers and siliques (at protein level).

The protein resides in the plastid. It localises to the chloroplast. It carries out the reaction L-methionyl-[protein] + [thioredoxin]-disulfide + H2O = L-methionyl-(R)-S-oxide-[protein] + [thioredoxin]-dithiol. Functionally, catalyzes the reduction of methionine sulfoxide (MetSO) to methionine in proteins. Specifically reduces the MetSO R-enantiomer. Plays a protective role against oxidative stress by restoring activity to proteins that have been inactivated by methionine oxidation. May play an essential function in association with MSRB2 in maintaining vegetative growth during environmental constraints, through the preservation of photosynthetic antennae. MSRB1 and MSRB2 account for most of the leaf peptide MSR capacity. In Arabidopsis thaliana (Mouse-ear cress), this protein is Peptide methionine sulfoxide reductase B1, chloroplastic.